A 479-amino-acid chain; its full sequence is Aspartyl/glutamyl-tRNA(Asn/Gln) amidotransferase subunit B (479 aa).

Belongs to the GatB/GatE family. GatB subfamily. As to quaternary structure, heterotrimer of A, B and C subunits.

The enzyme catalyses L-glutamyl-tRNA(Gln) + L-glutamine + ATP + H2O = L-glutaminyl-tRNA(Gln) + L-glutamate + ADP + phosphate + H(+). It carries out the reaction L-aspartyl-tRNA(Asn) + L-glutamine + ATP + H2O = L-asparaginyl-tRNA(Asn) + L-glutamate + ADP + phosphate + 2 H(+). Its function is as follows. Allows the formation of correctly charged Asn-tRNA(Asn) or Gln-tRNA(Gln) through the transamidation of misacylated Asp-tRNA(Asn) or Glu-tRNA(Gln) in organisms which lack either or both of asparaginyl-tRNA or glutaminyl-tRNA synthetases. The reaction takes place in the presence of glutamine and ATP through an activated phospho-Asp-tRNA(Asn) or phospho-Glu-tRNA(Gln). The chain is Aspartyl/glutamyl-tRNA(Asn/Gln) amidotransferase subunit B from Streptococcus pyogenes serotype M3 (strain ATCC BAA-595 / MGAS315).